The chain runs to 228 residues: 6-carboxyhexanoate--CoA ligase (228 aa).

The protein belongs to the BioW family. Homodimer. Requires Mg(2+) as cofactor.

It catalyses the reaction heptanedioate + ATP + CoA = 6-carboxyhexanoyl-CoA + AMP + diphosphate. Its pathway is metabolic intermediate metabolism; pimeloyl-CoA biosynthesis; pimeloyl-CoA from pimelate: step 1/1. In terms of biological role, catalyzes the transformation of pimelate into pimeloyl-CoA with concomitant hydrolysis of ATP to AMP. In Staphylococcus epidermidis (strain ATCC 12228 / FDA PCI 1200), this protein is 6-carboxyhexanoate--CoA ligase.